We begin with the raw amino-acid sequence, 462 residues long: L-seryl-tRNA(Sec) selenium transferase (462 aa).

N6-(pyridoxal phosphate)lysine is present on Lys-293.

Belongs to the SelA family. Pyridoxal 5'-phosphate is required as a cofactor.

The protein localises to the cytoplasm. It catalyses the reaction L-seryl-tRNA(Sec) + selenophosphate + H(+) = L-selenocysteinyl-tRNA(Sec) + phosphate. It functions in the pathway aminoacyl-tRNA biosynthesis; selenocysteinyl-tRNA(Sec) biosynthesis; selenocysteinyl-tRNA(Sec) from L-seryl-tRNA(Sec) (bacterial route): step 1/1. Converts seryl-tRNA(Sec) to selenocysteinyl-tRNA(Sec) required for selenoprotein biosynthesis. In Clostridium botulinum (strain Langeland / NCTC 10281 / Type F), this protein is L-seryl-tRNA(Sec) selenium transferase.